A 221-amino-acid polypeptide reads, in one-letter code: Ribosomal RNA large subunit methyltransferase E (221 aa).

Residues G60, W62, D89, D105, and D134 each coordinate S-adenosyl-L-methionine. K174 acts as the Proton acceptor in catalysis.

Belongs to the class I-like SAM-binding methyltransferase superfamily. RNA methyltransferase RlmE family.

It localises to the cytoplasm. It catalyses the reaction uridine(2552) in 23S rRNA + S-adenosyl-L-methionine = 2'-O-methyluridine(2552) in 23S rRNA + S-adenosyl-L-homocysteine + H(+). Its function is as follows. Specifically methylates the uridine in position 2552 of 23S rRNA at the 2'-O position of the ribose in the fully assembled 50S ribosomal subunit. This is Ribosomal RNA large subunit methyltransferase E from Cupriavidus metallidurans (strain ATCC 43123 / DSM 2839 / NBRC 102507 / CH34) (Ralstonia metallidurans).